Consider the following 61-residue polypeptide: Photosystem II reaction center X protein (61 aa).

Residues 26–46 (IGSFIAAALLIVIPATAFLIF) form a helical membrane-spanning segment.

The protein belongs to the PsbX family. Type 2 subfamily. In terms of assembly, PSII consists of a core antenna complex that captures photons, and an electron transfer chain that converts photonic excitation into a charge separation. PSII forms dimeric complexes.

The protein resides in the cellular thylakoid membrane. Functionally, involved in the binding and/or turnover of quinones at the Q(B) site of Photosystem II. The sequence is that of Photosystem II reaction center X protein from Prochlorococcus marinus (strain MIT 9215).